Reading from the N-terminus, the 402-residue chain is Speedy protein E6 (402 aa).

Residues 1-89 (MDRTETRFRK…EEPEKELAPE (89 aa)) form a disordered region. Residues 16–39 (GKITTSRQPHPQNEQSPQRSTSGY) are compositionally biased toward polar residues. The segment covering 76 to 89 (DESEEEPEKELAPE) has biased composition (acidic residues).

It belongs to the Speedy/Ringo family.

The chain is Speedy protein E6 (SPDYE6) from Homo sapiens (Human).